Consider the following 193-residue polypeptide: dTTP/UTP pyrophosphatase (193 aa).

The active-site Proton acceptor is the D77.

It belongs to the Maf family. YhdE subfamily. It depends on a divalent metal cation as a cofactor.

It is found in the cytoplasm. The catalysed reaction is dTTP + H2O = dTMP + diphosphate + H(+). The enzyme catalyses UTP + H2O = UMP + diphosphate + H(+). Its function is as follows. Nucleoside triphosphate pyrophosphatase that hydrolyzes dTTP and UTP. May have a dual role in cell division arrest and in preventing the incorporation of modified nucleotides into cellular nucleic acids. This chain is dTTP/UTP pyrophosphatase, found in Bacteroides fragilis (strain ATCC 25285 / DSM 2151 / CCUG 4856 / JCM 11019 / LMG 10263 / NCTC 9343 / Onslow / VPI 2553 / EN-2).